Here is a 214-residue protein sequence, read N- to C-terminus: Nigrelysin (214 aa).

The N-terminal stretch at M1 to A21 is a signal peptide. Residues L22–R35 constitute a propeptide that is removed on maturation. The segment at E38–A47 is plays an important role in the hemolytic activity. The N-terminal region stretch occupies residues G46–S65. The phosphocholine site is built by S89, V122, S140, P142, Y168, Y172, and Y173. The segment at S140 to K155 is trp-rich region, which is important for the binding to lipid membrane. Positions K179–D181 match the Cell attachment site, crucial for protein stability motif.

Belongs to the actinoporin family. Sea anemone subfamily. Octamer or nonamer in membranes. Monomer in the soluble state.

The protein localises to the secreted. Its subcellular location is the nematocyst. It is found in the target cell membrane. In terms of biological role, pore-forming protein that forms cation-selective hydrophilic pores in cell membranes and causes cytolysis. Pore formation is a multi-step process that involves specific recognition of membrane sphingomyelin (but neither cholesterol nor phosphatidylcholine) using aromatic rich region and adjacent phosphocholine (POC) binding site, firm binding to the membrane (mainly driven by hydrophobic interactions) accompanied by the transfer of the N-terminal region to the lipid-water interface and finally pore formation after oligomerization of monomers. This protein shows potent hemolytic activity (EC(50)=0.09 nM), as well as potent cytotoxic activity on nucleated cells (L1210 cells). The cytotoxic process starts with cellular swelling that is time and dose dependent and occurs up to a critical volume, probably due to influx of water via pores opened by this actinoporin. The second phase consists of the final loss of membrane integrity that leads to cytolysis. The protein is Nigrelysin of Anthopleura nigrescens (Sea anemone).